A 307-amino-acid chain; its full sequence is Voltage-dependent anion channel-forming protein sll1024 (307 aa).

4 helical membrane passes run 26-46 (VIPAIASRVLVCMAFSLGVTL), 54-74 (FSIPIQESIVPSIVLGLLLVF), 226-246 (LIFLYCFITPFQIVNTLHWAT), and 247-267 (AFVVGIIAFTVFGIEEIGVEI).

It belongs to the anion channel-forming bestrophin (TC 1.A.46) family.

The protein resides in the cell membrane. This is Voltage-dependent anion channel-forming protein sll1024 from Synechocystis sp. (strain ATCC 27184 / PCC 6803 / Kazusa).